We begin with the raw amino-acid sequence, 304 residues long: Non-specific ribonucleoside hydrolase RihC (304 aa).

The active site involves His-233.

This sequence belongs to the IUNH family. RihC subfamily.

Its function is as follows. Hydrolyzes both purine and pyrimidine ribonucleosides with a broad-substrate specificity. The protein is Non-specific ribonucleoside hydrolase RihC of Shigella boydii serotype 18 (strain CDC 3083-94 / BS512).